Consider the following 315-residue polypeptide: Acetaldehyde dehydrogenase (315 aa).

13–16 (SGNI) contributes to the NAD(+) binding site. C131 (acyl-thioester intermediate) is an active-site residue. NAD(+) contacts are provided by residues 163–171 (SAGPGTRAN) and N290.

It belongs to the acetaldehyde dehydrogenase family.

It carries out the reaction acetaldehyde + NAD(+) + CoA = acetyl-CoA + NADH + H(+). The chain is Acetaldehyde dehydrogenase from Xanthobacter autotrophicus (strain ATCC BAA-1158 / Py2).